Here is a 224-residue protein sequence, read N- to C-terminus: Lipoprotein-releasing system ATP-binding protein LolD (224 aa).

An ABC transporter domain is found at 4–224 (YTAKDISKNY…TLLDGSLQEE (221 aa)). 40–47 (GASGSGKT) is an ATP binding site.

It belongs to the ABC transporter superfamily. Lipoprotein translocase (TC 3.A.1.125) family. In terms of assembly, the complex is composed of two ATP-binding proteins (LolD) and two transmembrane proteins (LolC and LolE).

It localises to the cell inner membrane. Part of the ABC transporter complex LolCDE involved in the translocation of mature outer membrane-directed lipoproteins, from the inner membrane to the periplasmic chaperone, LolA. Responsible for the formation of the LolA-lipoprotein complex in an ATP-dependent manner. This is Lipoprotein-releasing system ATP-binding protein LolD from Desulfotalea psychrophila (strain LSv54 / DSM 12343).